Here is an 864-residue protein sequence, read N- to C-terminus: Leucine--tRNA ligase (864 aa).

The 'HIGH' region motif lies at P42 to H52. Positions K624–S628 match the 'KMSKS' region motif. K627 provides a ligand contact to ATP.

Belongs to the class-I aminoacyl-tRNA synthetase family.

The protein resides in the cytoplasm. It carries out the reaction tRNA(Leu) + L-leucine + ATP = L-leucyl-tRNA(Leu) + AMP + diphosphate. The protein is Leucine--tRNA ligase of Burkholderia lata (strain ATCC 17760 / DSM 23089 / LMG 22485 / NCIMB 9086 / R18194 / 383).